The primary structure comprises 500 residues: Intermediate filament protein ifc-1 (500 aa).

The head stretch occupies residues 1-36 (MSLYGGIPTNLVSGMSSAGAICTTQIRDAREREKRE). An IF rod domain is found at 33 to 383 (EKREIGLLND…VLLNGANVTT (351 aa)). Residues 37–68 (IGLLNDRLADYIEKVRFLKAQNHVLSHDIEIL) are coil 1A. The interval 69-81 (RRGFSGGGHISSF) is linker 1. The segment at 82–219 (FESEISNCTV…TENSSRIEQE (138 aa)) is coil 1B. The tract at residues 220-237 (LIYIHRDTTLENRDYFRQ) is linker 12. The coil 2 stretch occupies residues 238-383 (ELQAAMRDIR…VLLNGANVTT (146 aa)). The segment at 384–496 (YVSNSTGAAG…RHHESSYSYS (113 aa)) is tail.

It belongs to the intermediate filament family.

It localises to the cytoplasm. Functionally, cytoplasmic intermediate filaments provide mechanical strength to cells. Not essential protein. This Caenorhabditis elegans protein is Intermediate filament protein ifc-1 (ifc-1).